A 269-amino-acid chain; its full sequence is 4-hydroxy-tetrahydrodipicolinate reductase (269 aa).

NAD(+) is bound by residues 8–13 (GAAGRM) and glutamate 34. Arginine 35 is an NADP(+) binding site. NAD(+) is bound by residues 98–100 (GTT) and 122–125 (APNY). The active-site Proton donor/acceptor is histidine 155. Histidine 156 lines the (S)-2,3,4,5-tetrahydrodipicolinate pocket. The active-site Proton donor is lysine 159. 165–166 (GT) provides a ligand contact to (S)-2,3,4,5-tetrahydrodipicolinate.

The protein belongs to the DapB family.

The protein resides in the cytoplasm. The enzyme catalyses (S)-2,3,4,5-tetrahydrodipicolinate + NAD(+) + H2O = (2S,4S)-4-hydroxy-2,3,4,5-tetrahydrodipicolinate + NADH + H(+). The catalysed reaction is (S)-2,3,4,5-tetrahydrodipicolinate + NADP(+) + H2O = (2S,4S)-4-hydroxy-2,3,4,5-tetrahydrodipicolinate + NADPH + H(+). Its pathway is amino-acid biosynthesis; L-lysine biosynthesis via DAP pathway; (S)-tetrahydrodipicolinate from L-aspartate: step 4/4. Its function is as follows. Catalyzes the conversion of 4-hydroxy-tetrahydrodipicolinate (HTPA) to tetrahydrodipicolinate. The chain is 4-hydroxy-tetrahydrodipicolinate reductase from Vibrio vulnificus (strain CMCP6).